The primary structure comprises 263 residues: Esterase mokD (263 aa).

Active-site charge relay system residues include serine 134, aspartate 208, and histidine 236.

It belongs to the LovG family.

It carries out the reaction dihydromonacolin L-[lovastatin nonaketide synthase] + H2O = holo-[lovastatin nonaketide synthase] + dihydromonacolin L carboxylate + H(+). Its pathway is polyketide biosynthesis; lovastatin biosynthesis. Functionally, esterase; part of the gene cluster that mediates the biosynthesis of monakolin K, also known as lovastatin, and which acts as a potent competitive inhibitor of HMG-CoA reductase. Monakolin K biosynthesis is performed in two stages. The first stage is catalyzed by the nonaketide synthase mokA, which belongs to type I polyketide synthases and catalyzes the iterative nine-step formation of the polyketide. This PKS stage completed by the action of dehydrogenase mokE, which catalyzes the NADPH-dependent reduction of the unsaturated tetra-, penta- and heptaketide intermediates that arise during the mokA-mediated biosynthesis of the nonaketide chain and leads to dihydromonacolin L. Covalently bound dihydromonacolin L is released from mokA by the mokD esterase. Conversion of dihydromonacolin L into monacolin L and then monacolin J is subsequently performed with the participation of molecular oxygen and P450 monoogygenase mokC. Finally, mokF performs the conversion of monacoline J to monacoline K through the addition of the side-chain diketide moiety (2R)-2-methylbutanoate produced by the diketide synthase mokB. The sequence is that of Esterase mokD from Monascus pilosus (Red mold).